Here is a 78-residue protein sequence, read N- to C-terminus: Consomatin Te1 (78 aa).

The signal sequence occupies residues 1-22; the sequence is MQTAYWMMVMMMVWITAPLSEG. A propeptide spanning residues 23-56 is cleaved from the precursor; that stretch reads GQLNDVIRGLVPDNLAPQLVLQSLDSRRHPHGIR. Cys-63 and Cys-68 are oxidised to a cystine. The residue at position 65 (Trp-65) is a D-tryptophan. 3 positions are modified to 4-hydroxyproline: Pro-69, Pro-70, and Pro-72. The propeptide occupies 74–78; it reads RRLGS.

This sequence belongs to the conotoxin C superfamily. Consomatin family. As to expression, expressed by the venom duct.

It localises to the secreted. Functionally, moderately activates human somatostatin receptors (SSTR) with a preferential activation of SSTR1 and SSTR4. In vivo, does not cause behavioral changes in mice within a few minutes of intracranial injection, but causes a progressive loss of movement thereafter. Four to five hours after injection, mice recover, even with the highest dose tested. Shows antinociception and antihyperalgesia activities in two mouse models of acute pain, most probably by acting outside the central nervous system. The chain is Consomatin Te1 from Conus terebra (Sea snail).